The following is a 331-amino-acid chain: Glyceraldehyde-3-phosphate dehydrogenase (331 aa).

Residues 10–11 (RI), aspartate 31, lysine 75, and threonine 117 contribute to the NAD(+) site. D-glyceraldehyde 3-phosphate-binding positions include 148–150 (SCT) and threonine 179. The active-site Nucleophile is the cysteine 149. Asparagine 180 is an NAD(+) binding site. Residues arginine 194, 207–208 (TG), and arginine 230 contribute to the D-glyceraldehyde 3-phosphate site. Asparagine 311 serves as a coordination point for NAD(+).

The protein belongs to the glyceraldehyde-3-phosphate dehydrogenase family. In terms of assembly, homotetramer.

It localises to the cytoplasm. It catalyses the reaction D-glyceraldehyde 3-phosphate + phosphate + NAD(+) = (2R)-3-phospho-glyceroyl phosphate + NADH + H(+). It functions in the pathway carbohydrate degradation; glycolysis; pyruvate from D-glyceraldehyde 3-phosphate: step 1/5. Functionally, catalyzes the oxidative phosphorylation of glyceraldehyde 3-phosphate (G3P) to 1,3-bisphosphoglycerate (BPG) using the cofactor NAD. The first reaction step involves the formation of a hemiacetal intermediate between G3P and a cysteine residue, and this hemiacetal intermediate is then oxidized to a thioester, with concomitant reduction of NAD to NADH. The reduced NADH is then exchanged with the second NAD, and the thioester is attacked by a nucleophilic inorganic phosphate to produce BPG. This chain is Glyceraldehyde-3-phosphate dehydrogenase (gap), found in Thermus aquaticus.